The primary structure comprises 440 residues: Adenylosuccinate synthetase (440 aa).

GTP contacts are provided by residues 12-18 and 40-42; these read GDEGKGK and GHT. Asp13 (proton acceptor) is an active-site residue. Residues Asp13 and Gly40 each coordinate Mg(2+). Residues 13–16, 38–41, Thr128, Arg142, Gln223, Thr238, and Arg302 each bind IMP; these read DEGK and NAGH. Catalysis depends on His41, which acts as the Proton donor. 298-304 lines the substrate pocket; it reads TTTGRPR. GTP-binding positions include Arg304, 330–332, and 412–414; these read KLD and SVG.

This sequence belongs to the adenylosuccinate synthetase family. Homodimer. Mg(2+) serves as cofactor.

Its subcellular location is the cytoplasm. It carries out the reaction IMP + L-aspartate + GTP = N(6)-(1,2-dicarboxyethyl)-AMP + GDP + phosphate + 2 H(+). It functions in the pathway purine metabolism; AMP biosynthesis via de novo pathway; AMP from IMP: step 1/2. In terms of biological role, plays an important role in the de novo pathway of purine nucleotide biosynthesis. Catalyzes the first committed step in the biosynthesis of AMP from IMP. This is Adenylosuccinate synthetase from Gloeobacter violaceus (strain ATCC 29082 / PCC 7421).